Reading from the N-terminus, the 308-residue chain is GDP-L-colitose synthase (308 aa).

NADP(+)-binding positions include 7–13 and 101–104; these read GAGGMVG and LGSS. The active-site Proton donor/acceptor is the Tyr132. Residues Lys136, 160-163, and His176 each bind NADP(+); that span reads PCNL. 3 residues coordinate substrate: Lys184, Trp199, and Arg206.

It belongs to the NAD(P)-dependent epimerase/dehydratase family. Fucose synthase subfamily. As to quaternary structure, homodimer.

The catalysed reaction is GDP-beta-L-colitose + NAD(+) = GDP-4-dehydro-3,6-dideoxy-alpha-D-mannose + NADH + H(+). It carries out the reaction GDP-beta-L-colitose + NADP(+) = GDP-4-dehydro-3,6-dideoxy-alpha-D-mannose + NADPH + H(+). The protein operates within nucleotide-sugar metabolism; GDP-L-colitose biosynthesis. Its function is as follows. Involved in the biosynthesis of the L-colitose (3,6-dideoxyl-L-xylo-hexose) present in the O-antigen region of lipopolysaccharides (LPS) where it serves as antigenic determinant and are vital for bacterial defense and survival. Catalyzes the two-step NADP-dependent conversion of GDP-4-keto-3,6-dideoxy-D-mannose to GDP-L-colitose. ColC is a bifunctional enzyme catalyzing the C-5 epimerization of GDP-4-keto-3,6-dideoxy-D-mannose and the subsequent C-4 keto reduction of the resulting L-epimer to give GDP-L-colitose. It can use both NADP(+) and NAD(+) as electron acceptor, with a slight preference for NADP(+). This is GDP-L-colitose synthase from Yersinia pseudotuberculosis.